A 195-amino-acid polypeptide reads, in one-letter code: MELNTHNAEILLSAANKSHYPQDELPEIALAGRSNVGKSSFINTMLNRKNLARTSGKPGKTQLLNFFNIDDKMRFVDVPGYGYARVSKKEREKWGCMIEEYLTTRENLRAVVSLVDLRHAPSADDVQMYEFLKYYEIPVIIVATKADKIPRGKWNKHESAIKKKLNFDPSDDFILFSSVSKAGMDEAWDAILEKL.

In terms of domain architecture, EngB-type G spans 24–195 (ELPEIALAGR…EAWDAILEKL (172 aa)). GTP contacts are provided by residues 32 to 39 (GRSNVGKS), 59 to 63 (GKTQL), 77 to 80 (DVPG), 144 to 147 (TKAD), and 176 to 178 (FSS). Residues Ser39 and Thr61 each coordinate Mg(2+).

This sequence belongs to the TRAFAC class TrmE-Era-EngA-EngB-Septin-like GTPase superfamily. EngB GTPase family. Mg(2+) is required as a cofactor.

In terms of biological role, necessary for normal cell division and for the maintenance of normal septation. This is Probable GTP-binding protein EngB from Streptococcus pneumoniae (strain JJA).